A 200-amino-acid polypeptide reads, in one-letter code: Regulator of G-protein signaling 16 (200 aa).

2 S-palmitoyl cysteine lipidation sites follow: C2 and C12. In terms of domain architecture, RGS spans 65–181 (SFDLLLSSKN…LKSPAYRDLA (117 aa)). Residues Y168 and Y177 each carry the phosphotyrosine modification.

Interacts with GNAI1 and GNAQ. Interacts with GNAI3, GNAI3 and GNAO1. In terms of assembly, (Microbial infection) Interacts with porcine circovirus 2 ORF3 protein. In terms of processing, palmitoylated on Cys-2 and/or Cys-12. Phosphorylated. Phosphorylation at Tyr-168 by EGFR enhances GTPase accelerating (GAP) activity toward GNAI1.

Its subcellular location is the membrane. Its function is as follows. Regulates G protein-coupled receptor signaling cascades. Inhibits signal transduction by increasing the GTPase activity of G protein alpha subunits, thereby driving them into their inactive GDP-bound form. Plays an important role in the phototransduction cascade by regulating the lifetime and effective concentration of activated transducin alpha. May regulate extra and intracellular mitogenic signals. (Microbial infection) Gets inactivated and/or degraded by porcine circovirus 2 ORF3 protein, leading to enhanced expression of IL-6 and IL-8 in infected lymphocytes. This would explain chronic inflammatory response of PCV2 infected pigs. The sequence is that of Regulator of G-protein signaling 16 (RGS16) from Sus scrofa (Pig).